The sequence spans 473 residues: Uronate isomerase (473 aa).

This sequence belongs to the metallo-dependent hydrolases superfamily. Uronate isomerase family.

It catalyses the reaction D-glucuronate = D-fructuronate. It carries out the reaction aldehydo-D-galacturonate = keto-D-tagaturonate. It participates in carbohydrate metabolism; pentose and glucuronate interconversion. This Bacillus subtilis (strain 168) protein is Uronate isomerase (uxaC).